The chain runs to 133 residues: Fatty acid-binding protein, heart (133 aa).

Position 2 is an N-acetylvaline (V2). T8 carries the phosphothreonine modification. The residue at position 20 (Y20) is a Phosphotyrosine; by Tyr-kinases. S23 carries the phosphoserine modification. Position 30 is a phosphothreonine (T30). S83 is subject to Phosphoserine. Position 127-129 (127-129) interacts with (9Z)-octadecenoate; it reads RTY. A hexadecanoate-binding site is contributed by 127 to 129; sequence RTY. Residue 127-129 coordinates octadecanoate; the sequence is RTY.

This sequence belongs to the calycin superfamily. Fatty-acid binding protein (FABP) family.

It localises to the cytoplasm. Functionally, FABPs are thought to play a role in the intracellular transport of long-chain fatty acids and their acyl-CoA esters. This is Fatty acid-binding protein, heart (FABP3) from Homo sapiens (Human).